A 442-amino-acid chain; its full sequence is PCI domain-containing protein C1105.07c (442 aa).

Residues 224-415 (VTFRYYLGRC…STLVLKKDPS (192 aa)) enclose the PCI domain.

Its subcellular location is the cytoplasm. It localises to the nucleus envelope. This chain is PCI domain-containing protein C1105.07c, found in Schizosaccharomyces pombe (strain 972 / ATCC 24843) (Fission yeast).